Reading from the N-terminus, the 288-residue chain is MEFIGKIIGVFLGWKVGGFFGAIAGLILGSIADKKLYELGSVSSSFFKKKTTRQDLFMQTSFAVLGHLSKSKGRVTEEDIQLANQLMIQLKLDDAGRKLAQDAFRRGKESDFPIRQVIREFRIGCGQRADLLRMFLQVQVQAAFADSELHENEKEVLYVIAEELGLSRMQFEQMIAMEMAARAFTQGGFYQKYQQGAYQGGYQYQQQNSGGYQHASGPTLNDAYKVLGVTESDEQSTVKRAYRRLMNEHHPDKLVAKGLPPEMMEMAKEKTQQIQAAYDLICKAKGWK.

Residues methionine 1 to lysine 6 are Periplasmic-facing. Residues isoleucine 7–serine 30 traverse the membrane as a helical segment. The Cytoplasmic portion of the chain corresponds to isoleucine 31–lysine 288. The J domain occupies aspartate 222–lysine 288.

In terms of assembly, homodimer.

It localises to the cell inner membrane. In terms of biological role, regulatory DnaK co-chaperone. Direct interaction between DnaK and DjlA is needed for the induction of the wcaABCDE operon, involved in the synthesis of a colanic acid polysaccharide capsule, possibly through activation of the RcsB/RcsC phosphotransfer signaling pathway. The colanic acid capsule may help the bacterium survive conditions outside the host. The sequence is that of Co-chaperone protein DjlA from Haemophilus influenzae (strain ATCC 51907 / DSM 11121 / KW20 / Rd).